Reading from the N-terminus, the 205-residue chain is Small heat shock protein hspG12 (205 aa).

A sHSP domain is found at 35–205; the sequence is KTIIDILPPM…YSNTIKININ (171 aa). Residues 99–147 form a disordered region; the sequence is PSLLDTKEDEASIEEFDEDDIKPKSTETTSTLSNSKENKKDENKSKSTE. A compositionally biased stretch (acidic residues) spans 109-118; the sequence is ASIEEFDEDD. Over residues 134–147 the composition is skewed to basic and acidic residues; the sequence is KENKKDENKSKSTE.

This sequence belongs to the small heat shock protein (HSP20) family.

The polypeptide is Small heat shock protein hspG12 (hspG12) (Dictyostelium discoideum (Social amoeba)).